Reading from the N-terminus, the 227-residue chain is Phosphoglycolate phosphatase (227 aa).

Asp-9 acts as the Nucleophile in catalysis. Positions 9, 11, and 171 each coordinate Mg(2+).

It belongs to the HAD-like hydrolase superfamily. CbbY/CbbZ/Gph/YieH family. Mg(2+) is required as a cofactor.

The catalysed reaction is 2-phosphoglycolate + H2O = glycolate + phosphate. It participates in organic acid metabolism; glycolate biosynthesis; glycolate from 2-phosphoglycolate: step 1/1. Specifically catalyzes the dephosphorylation of 2-phosphoglycolate. Is involved in the dissimilation of the intracellular 2-phosphoglycolate formed during the DNA repair of 3'-phosphoglycolate ends, a major class of DNA lesions induced by oxidative stress. The sequence is that of Phosphoglycolate phosphatase from Mesorhizobium japonicum (strain LMG 29417 / CECT 9101 / MAFF 303099) (Mesorhizobium loti (strain MAFF 303099)).